The following is a 38-amino-acid chain: Potassium channel toxin alpha-KTx 3.2 (38 aa).

3 disulfides stabilise this stretch: Cys8–Cys28, Cys14–Cys33, and Cys18–Cys35.

It belongs to the short scorpion toxin superfamily. Potassium channel inhibitor family. Alpha-KTx 03 subfamily. In terms of tissue distribution, expressed by the venom gland.

The protein localises to the secreted. Functionally, potent inhibitor of the Shaker potassium channels and its mammalian homologs (Kv1.1/KCNA1, Kv1.3/KCNA3, Kv1.6/KCNA6) (Ki&lt;1 nM for all channels). Also blocks Kv1.2/KCNA2 (IC(50)=26.8 nM). It also shows a weak interaction with nicotinic acetylcholine receptors (nAChR), suggesting it may weakly inhibit it. The sequence is that of Potassium channel toxin alpha-KTx 3.2 from Leiurus hebraeus (Hebrew deathstalker scorpion).